The following is a 956-amino-acid chain: Angiomotin-like protein 1 (956 aa).

The tract at residues 197–246 (QSQFFRGQQQQQQQQGAVGHGYYMAGGTSQKSRTEGRPTVNRANSGQAHK) is disordered. Residues serine 241 and serine 269 each carry the phosphoserine modification. The stretch at 259–279 (RSLSERIMQLSLERNGAKQHL) forms a coiled coil. 3 disordered regions span residues 274 to 322 (GAKQ…QMMS), 382 to 405 (PSTM…LHSV), and 411 to 430 (LPMA…SQQL). Residues 282-294 (SGNGKGFKVGGGP) are compositionally biased toward gly residues. Serine 295 carries the post-translational modification Phosphoserine. Residues 382-398 (PSTMQQHSPMSSQTSSA) are compositionally biased toward polar residues. 2 coiled-coil regions span residues 438–639 (VERA…WLER) and 665–694 (ALLE…YLEE). Serine 720 carries the phosphoserine modification. Residues 729–762 (SLEAHIWQEEEEVVQANRRCQDMEYTIKNLHAKI) adopt a coiled-coil conformation. Residues 773–823 (QQRSRKDAGKTDSSSLRPARSVPSIAAATGTHSRQTSLTSSQLAEEKKEEK) are disordered. Serine 793, serine 805, and serine 828 each carry phosphoserine. Residues 802–815 (GTHSRQTSLTSSQL) are compositionally biased toward polar residues. Disordered regions lie at residues 841–880 (ASAP…TQTD) and 894–944 (PSRG…LHKP). The segment covering 852–866 (SALSSIASTTAASSA) has biased composition (low complexity). The residue at position 900 (serine 900) is a Phosphoserine. Phosphothreonine is present on threonine 902. Serine 906 carries the post-translational modification Phosphoserine. Positions 953 to 956 (EVLI) match the PDZ-binding motif.

It belongs to the angiomotin family. Polyubiquitinated by NEDD4, leading to proteasomal degradation.

Its subcellular location is the cell junction. It is found in the tight junction. Its function is as follows. Inhibits the Wnt/beta-catenin signaling pathway, probably by recruiting CTNNB1 to recycling endosomes and hence preventing its translocation to the nucleus. This Homo sapiens (Human) protein is Angiomotin-like protein 1 (AMOTL1).